We begin with the raw amino-acid sequence, 366 residues long: MNNNYHIAVLPGDGIGPETTRQVYKILNVIKKQFQINIVTTEHKIGGDAINSEGTPFPKSTLKYCEQSNAILFGAVGGPQWTHLKGSESPEQGALLALRKHFNLFANLRPIYLADELKELSPLNINMIPNGIDIIFVRELTGGIYFGQPKGRSGTGLNEYAFDTAVYHRFEIERIANIAFKLAQKRRKRVSSIDKANVLHTSMLWREVVSHLAKNYPDVELEHLYIDNASMQLINNPSKFDIILCPNLFGDILSDECAMISGSIGMLPSASINEHNFGLYEPAGGSAPDIAEKNIANPIAHILSIALLFRYSLKLDHIAIKIEKAVSQALMLGYRTIDIAKKHEKSISTNEMGDIIAALIKNEREK.

78–91 is a binding site for NAD(+); it reads GPQWTHLKGSESPE. Residues Arg99, Arg109, Arg138, and Asp227 each coordinate substrate. Residues Asp227, Asp251, and Asp255 each coordinate Mg(2+). 285–297 provides a ligand contact to NAD(+); sequence GSAPDIAEKNIAN.

Belongs to the isocitrate and isopropylmalate dehydrogenases family. LeuB type 1 subfamily. As to quaternary structure, homodimer. Mg(2+) serves as cofactor. Mn(2+) is required as a cofactor.

The protein resides in the cytoplasm. The enzyme catalyses (2R,3S)-3-isopropylmalate + NAD(+) = 4-methyl-2-oxopentanoate + CO2 + NADH. The protein operates within amino-acid biosynthesis; L-leucine biosynthesis; L-leucine from 3-methyl-2-oxobutanoate: step 3/4. Functionally, catalyzes the oxidation of 3-carboxy-2-hydroxy-4-methylpentanoate (3-isopropylmalate) to 3-carboxy-4-methyl-2-oxopentanoate. The product decarboxylates to 4-methyl-2 oxopentanoate. This chain is 3-isopropylmalate dehydrogenase, found in Blochmanniella pennsylvanica (strain BPEN).